Here is a 1178-residue protein sequence, read N- to C-terminus: Mannosyltransferase regulator 4 (1178 aa).

The Cytoplasmic portion of the chain corresponds to 1–27; it reads MLQRISSKLHRRFLSGLLRVKHYPLRR. A helical; Signal-anchor for type II membrane protein transmembrane segment spans residues 28 to 48; sequence ILLPLILLQIIIITFIWSNSP. Topologically, residues 49–1178 are lumenal; the sequence is QRNGLGRDAD…KKKQEEGHSN (1130 aa). The DXD signature appears at 519–521; that stretch reads DFD. The segment at 1041–1178 is disordered; the sequence is EKKKKEEEEK…KKKQEEGHSN (138 aa). Tandem repeats lie at residues 1042–1049, 1050–1057, 1058–1065, 1066–1073, 1074–1081, and 1082–1089. Positions 1042–1174 are 17 X 8 AA tandem repeats of K-K-K-K-E-E-E-E; that stretch reads KKKKEEEEKK…EEEEKKKQEE (133 aa). Residues 1090-1097 form a 7; approximate repeat; sequence KKKQEEEE. The stretch at 1098 to 1105 is repeat 8; that stretch reads KKKKEEEE. One copy of the 9; approximate repeat lies at 1106–1113; it reads KKKQEEGE. The 10; approximate repeat unit spans residues 1114-1121; that stretch reads KMKNEDEE. One copy of the 11; approximate repeat lies at 1122 to 1129; it reads NKKNEDEE. Residues 1130–1137 form repeat 12; sequence KKKNEEEE. One copy of the 13; approximate repeat lies at 1138-1144; it reads KKKQEEK. The stretch at 1145–1152 is one 14; approximate repeat; sequence NKKNEDEE. A 15; approximate repeat occupies 1153–1160; the sequence is KKKQEEEE. The stretch at 1161 to 1168 is one 16; approximate repeat; the sequence is KKKNEEEE. The stretch at 1169–1174 is one 17; truncated repeat; the sequence is KKKQEE.

Belongs to the MNN4 family.

It localises to the golgi apparatus membrane. Its function is as follows. Golgi apparatus protein involved in N-glycan mannosylphosphorylation. While MNN4 seems to have a regulatory role in N-glycan mannosylphosphorylation, a transferase activity of MNN4 can not be ruled out. Mediates mannosylphosphate transfer in both the core and outer chain portions of N-linked oligosaccharides. Has partially redundant function with MNN14. The protein is Mannosyltransferase regulator 4 of Saccharomyces cerevisiae (strain ATCC 204508 / S288c) (Baker's yeast).